Reading from the N-terminus, the 229-residue chain is Protein FMP52-2, mitochondrial (229 aa).

Residues 1–45 constitute a mitochondrion transit peptide; it reads MAAGAFILGSTGLCGYQMLRFAEKSSLFDKISTVGRKLPDFKSEK.

Belongs to the FMP52 family.

The protein resides in the mitochondrion outer membrane. The protein is Protein FMP52-2, mitochondrial (FMP522) of Scheffersomyces stipitis (strain ATCC 58785 / CBS 6054 / NBRC 10063 / NRRL Y-11545) (Yeast).